A 421-amino-acid polypeptide reads, in one-letter code: MSSILVEGGKSLRGEINISGAKNAALPIIVASLLSSKTLVINNVPQLSDVSDMLFILKSCGVHVEIVESGTIALTANNISCHFSPPCNIVKKMRASIWILAPLLLRLGQVRIALPGGCAIGQRRIDLHLAALKAFGANIQLEEDYISANCSSRMHGISFKFDKVSVGATITAIMCAVLANGSTKLANCAQEPEIADLCYCLRKMGANITGIGTANISIIGVKELNGANYSIIPDRIEAGTYMVAAAITQGKIKLNNVIFKHLKSAITKLRLSGAIIQYQNENSLIIEGANIIKPLNIQTNPYPNFPTDLQAQFMSLMSIADGVSIITENIYENRYMHVFELIKMGANIVIQSREAIVTGVKKLHGADVIATDLRASVSLVLAGLSAAGITRVKRMHHLDRGYESLVEKLQNCNARVQRIPD.

A phosphoenolpyruvate-binding site is contributed by 22-23; sequence KN. Arginine 94 provides a ligand contact to UDP-N-acetyl-alpha-D-glucosamine. The active-site Proton donor is the cysteine 118. At cysteine 118 the chain carries 2-(S-cysteinyl)pyruvic acid O-phosphothioketal. Residues 163 to 166, aspartate 308, and isoleucine 330 each bind UDP-N-acetyl-alpha-D-glucosamine; that span reads KVSV.

Belongs to the EPSP synthase family. MurA subfamily.

The protein resides in the cytoplasm. The enzyme catalyses phosphoenolpyruvate + UDP-N-acetyl-alpha-D-glucosamine = UDP-N-acetyl-3-O-(1-carboxyvinyl)-alpha-D-glucosamine + phosphate. It participates in cell wall biogenesis; peptidoglycan biosynthesis. Cell wall formation. Adds enolpyruvyl to UDP-N-acetylglucosamine. The polypeptide is UDP-N-acetylglucosamine 1-carboxyvinyltransferase (Orientia tsutsugamushi (strain Ikeda) (Rickettsia tsutsugamushi)).